A 126-amino-acid polypeptide reads, in one-letter code: Desulfoferrodoxin (126 aa).

The Fe cation site is built by cysteine 10, cysteine 13, cysteine 29, cysteine 30, histidine 49, histidine 69, histidine 75, cysteine 116, and histidine 119.

It belongs to the desulfoferrodoxin family. In terms of assembly, homodimer. Fe(3+) serves as cofactor. Requires Cu(2+) as cofactor.

The enzyme catalyses reduced [rubredoxin] + superoxide + 2 H(+) = oxidized [rubredoxin] + H2O2. Functionally, catalyzes the one-electron reduction of superoxide anion radical to hydrogen peroxide at a nonheme ferrous iron center. Plays a fundamental role in case of oxidative stress via its superoxide detoxification activity. This Nitratidesulfovibrio vulgaris (strain ATCC 29579 / DSM 644 / CCUG 34227 / NCIMB 8303 / VKM B-1760 / Hildenborough) (Desulfovibrio vulgaris) protein is Desulfoferrodoxin (dfx).